Here is a 90-residue protein sequence, read N- to C-terminus: Trp-8 progonadoliberin (90 aa).

The signal sequence occupies residues 1–24; the sequence is MSRHVTVVLLLAVVLLLSSHMSHG. Q25 is modified (pyrrolidone carboxylic acid). G34 carries the glycine amide modification.

Belongs to the GnRH family. Expressed in forebrain but not in testis, ovary, kidney and liver.

Its subcellular location is the secreted. Its function is as follows. Stimulates the secretion of gonadotropins. In Rana dybowskii (Dybovsky's frog), this protein is Trp-8 progonadoliberin.